The chain runs to 59 residues: Cuticle protein 7 isoform b (59 aa).

The residue at position 1 (Gln-1) is a Pyrrolidone carboxylic acid.

This Limulus polyphemus (Atlantic horseshoe crab) protein is Cuticle protein 7 isoform b.